Here is a 513-residue protein sequence, read N- to C-terminus: Histidine ammonia-lyase (513 aa).

Positions 142–144 form a cross-link, 5-imidazolinone (Ala-Gly); it reads ASG. Residue S143 is modified to 2,3-didehydroalanine (Ser).

Belongs to the PAL/histidase family. In terms of processing, contains an active site 4-methylidene-imidazol-5-one (MIO), which is formed autocatalytically by cyclization and dehydration of residues Ala-Ser-Gly.

The protein localises to the cytoplasm. The enzyme catalyses L-histidine = trans-urocanate + NH4(+). It functions in the pathway amino-acid degradation; L-histidine degradation into L-glutamate; N-formimidoyl-L-glutamate from L-histidine: step 1/3. The chain is Histidine ammonia-lyase from Hyphomonas neptunium (strain ATCC 15444).